The primary structure comprises 257 residues: Global transcriptional regulator CodY (257 aa).

The segment at 1–155 (MSLLSKTREL…AATVIGMEIL (155 aa)) is GAF domain. V22, F24, S43, R44, R45, and K47 together coordinate GTP. The L-isoleucine site is built by R61, T96, and F98. E153 and K158 together coordinate GTP. The H-T-H motif DNA-binding region spans 203–222 (ASKVADRVGITRSVIVNALR).

This sequence belongs to the CodY family. Homodimer. Homotetramer. May form homodimers under conditions in which energy sources are sufficient (active state) and homotetramers under insufficient nutrient conditions (inactive state).

The protein localises to the cytoplasm. Activity of CodY is modulated by interaction with two types of effectors: the branched-chain amino acids (BCAAs) leucine, isoleucine and valine, which are signals of the nutritional status of the cell, and GTP, which may signal the energetic status of the cell. DNA-binding global transcriptional regulator which is involved in the adaptive response to starvation and acts by directly or indirectly controlling the expression of numerous genes in response to nutrient availability. During rapid exponential growth, CodY is highly active and represses genes whose products allow adaptation to nutrient depletion. The sequence is that of Global transcriptional regulator CodY from Staphylococcus aureus (strain Mu3 / ATCC 700698).